A 373-amino-acid polypeptide reads, in one-letter code: T-protein (373 aa).

The region spanning 1 to 90 (MVAELTALRD…ESYSSENDKG (90 aa)) is the Chorismate mutase domain. The Prephenate/arogenate dehydrogenase domain maps to 99–361 (RPVVIVGGGG…DYAQRFQSES (263 aa)).

In the C-terminal section; belongs to the prephenate/arogenate dehydrogenase family.

The protein resides in the cytoplasm. The enzyme catalyses chorismate = prephenate. It carries out the reaction prephenate + NAD(+) = 3-(4-hydroxyphenyl)pyruvate + CO2 + NADH. Its pathway is amino-acid biosynthesis; L-tyrosine biosynthesis; (4-hydroxyphenyl)pyruvate from prephenate (NAD(+) route): step 1/1. It participates in metabolic intermediate biosynthesis; prephenate biosynthesis; prephenate from chorismate: step 1/1. The chain is T-protein (tyrA) from Escherichia coli (strain K12).